Consider the following 127-residue polypeptide: Protein chibby homolog 1 (127 aa).

The interval 1-25 (MPLFGSIFSPKKTPPRKSASLSNLH) is disordered. Phosphoserine is present on residues Ser-9 and Ser-20. Residues 60–112 (VADSVISGGVDRRETQRLRKRNQQLEEENNLLRLKVDILLDMLSETTAESHLK) form a minimal region for the interaction with PKD2 region. A coiled-coil region spans residues 68–110 (GVDRRETQRLRKRNQQLEEENNLLRLKVDILLDMLSETTAESH). The interval 77–98 (LRKRNQQLEEENNLLRLKVDIL) is leucine-zipper; mediates homodimerization.

It belongs to the chibby family. In terms of assembly, homodimer. Homodimerization is essential for nuclear localization and interaction with KPNA4 but is dispensable for interaction with CTNNB1. Interacts with polycystin-2/PKD2 and GM130. Interacts with the C-terminal region of CTNNB1. Interacts (C-terminus) with TCIM (C-terminus), TCIM competes with CTNNB1 for the interaction with CBY1. Interacts with FAM92A; this interaction facilitates targeting of FAM92A to cilium basal body. Interacts with CIBAR2. Interacts with KPNA4.

Its subcellular location is the nucleus speckle. The protein localises to the cytoplasm. It is found in the cytoskeleton. The protein resides in the cilium basal body. It localises to the microtubule organizing center. Its subcellular location is the centrosome. The protein localises to the centriole. It is found in the golgi apparatus. The protein resides in the trans-Golgi network. It localises to the cell projection. Its subcellular location is the cilium. The protein localises to the flagellum. It is found in the nucleus. Its function is as follows. Inhibits the Wnt/Wingless pathway by binding to CTNNB1/beta-catenin and inhibiting beta-catenin-mediated transcriptional activation through competition with TCF/LEF transcription factors. Has also been shown to play a role in regulating the intracellular trafficking of polycystin-2/PKD2 and possibly of other intracellular proteins. Promotes adipocyte and cardiomyocyte differentiation. The sequence is that of Protein chibby homolog 1 (Cby1) from Rattus norvegicus (Rat).